A 362-amino-acid chain; its full sequence is Ferredoxin--NADP reductase, leaf isozyme 1, chloroplastic (362 aa).

A chloroplast-targeting transit peptide spans 1 to 62 (MAAVTAAAVS…DAAAVAAAPA (62 aa)). An FAD-binding FR-type domain is found at 83–205 (KEPYVGKCLL…TGPVGKEMLM (123 aa)). FAD contacts are provided by residues 141 to 144 (RLYS), 162 to 164 (CVK), Tyr-168, 179 to 181 (VCS), and Thr-220. NADP(+) is bound by residues Ser-144 and Lys-164. Cys-180 and Cys-185 form a disulfide bridge. Residue Ser-181 is modified to Phosphoserine. Residues Thr-220, 252-253 (VP), 282-283 (SR), Lys-292, 321-322 (GL), and Glu-360 contribute to the NADP(+) site.

Belongs to the ferredoxin--NADP reductase type 1 family. As to quaternary structure, component of high molecular weight thylakoid LFNRs-containing protein complexes containing LIR1, LFNR1, LFNR2, TIC62 and TROL proteins. Interacts directly with LIR1 and TIC62; LIR1 increases the affinity of LFNR1 and LFNR2 for TIC62. FAD is required as a cofactor. In terms of processing, may form interchain disulfide bonds with LIR1.

Its subcellular location is the plastid. The protein resides in the chloroplast stroma. The protein localises to the chloroplast thylakoid membrane. It carries out the reaction 2 reduced [2Fe-2S]-[ferredoxin] + NADP(+) + H(+) = 2 oxidized [2Fe-2S]-[ferredoxin] + NADPH. The protein operates within energy metabolism; photosynthesis. In terms of biological role, may play a key role in regulating the relative amounts of cyclic and non-cyclic electron flow to meet the demands of the plant for ATP and reducing power. This Oryza sativa subsp. japonica (Rice) protein is Ferredoxin--NADP reductase, leaf isozyme 1, chloroplastic.